A 171-amino-acid chain; its full sequence is MEPAADSSSSLQTFQTEVTEDSFGKFILTCNIARIRGEPSNVYTGLNIGCRLPECPPENPFEIYYLMKDSELQENNDWIRLYLELAVATTDRNREASDFGLSNLEIVNVAVDAEGLLNAKNAIFYIRYKDLYEARLGNAVFDRIAIVRRIFDEDTGRFTLVGQNQSSDIIN.

This sequence belongs to the UPF0725 (EMB2204) family.

The polypeptide is UPF0725 protein At3g25080 (Arabidopsis thaliana (Mouse-ear cress)).